Here is a 287-residue protein sequence, read N- to C-terminus: 4-hydroxybenzoate octaprenyltransferase (287 aa).

8 helical membrane passes run 19 to 39 (IGSL…ADGL), 42 to 62 (WHVL…GCVI), 95 to 115 (FFAV…TLTI), 136 to 156 (YLPQ…AYAA), 166 to 186 (WLLF…YAMV), 210 to 230 (IIGL…SQLA), 233 to 253 (GIYY…QWLI), and 264 to 284 (AFLN…ASVL).

It belongs to the UbiA prenyltransferase family. Requires Mg(2+) as cofactor.

It localises to the cell inner membrane. It catalyses the reaction all-trans-octaprenyl diphosphate + 4-hydroxybenzoate = 4-hydroxy-3-(all-trans-octaprenyl)benzoate + diphosphate. Its pathway is cofactor biosynthesis; ubiquinone biosynthesis. Functionally, catalyzes the prenylation of para-hydroxybenzoate (PHB) with an all-trans polyprenyl group. Mediates the second step in the final reaction sequence of ubiquinone-8 (UQ-8) biosynthesis, which is the condensation of the polyisoprenoid side chain with PHB, generating the first membrane-bound Q intermediate 3-octaprenyl-4-hydroxybenzoate. This Aliivibrio fischeri (strain MJ11) (Vibrio fischeri) protein is 4-hydroxybenzoate octaprenyltransferase.